We begin with the raw amino-acid sequence, 291 residues long: Verruculogen synthase (291 aa).

Y68 is an active-site residue.

It belongs to the PhyH family. Homodimer. Requires Fe cation as cofactor.

It catalyses the reaction fumitremorgin B + 2-oxoglutarate + AH2 + 2 O2 = verruculogen + succinate + A + CO2 + H2O. The protein operates within mycotoxin biosynthesis. Verruculogen synthase; part of the gene cluster that mediates the biosynthesis of fumitremorgins, indole alkaloids that carry not only intriguing chemical structures, but also interesting biological and pharmacological activities. The biosynthesis of fumitremorgin-type alkaloids begins by condensation of the two amino acids L-tryptophan and L-proline to brevianamide F, catalyzed by the non-ribosomal peptide synthetase ftmA. Brevianamide F is then prenylated by the prenyltransferase ftmPT1/ftmB in the presence of dimethylallyl diphosphate, resulting in the formation of tryprostatin B. The three cytochrome P450 monooxygenases, ftmP450-1/ftmC, ftmP450-2/ftmE and ftmP450-3/FtmG, are responsible for the conversion of tryprostatin B to 6-hydroxytryprostatin B, tryprostatin A to fumitremorgin C and fumitremorgin C to 12,13-dihydroxyfumitremorgin C, respectively. The putative methyltransferase ftmMT/ftmD is expected for the conversion of 6-hydroxytryprostatin B to tryprostatin A. FtmPT2/FtmH catalyzes the prenylation of 12,13-dihydroxyfumitre-morgin C in the presence of dimethylallyl diphosphate, resulting in the formation of fumitremorgin B. Fumitremorgin B is further converted to verruculogen by ftmOx1/ftmF via the insertion of an endoperoxide bond between the two prenyl moieties. In some fungal species, verruculogen is further converted to fumitremorgin A, but the enzymes involved in this step have not been identified yet. This Aspergillus fumigatus (strain ATCC MYA-4609 / CBS 101355 / FGSC A1100 / Af293) (Neosartorya fumigata) protein is Verruculogen synthase.